The chain runs to 200 residues: Holliday junction branch migration complex subunit RuvA (200 aa).

Residues methionine 1 to serine 63 are domain I. Residues serine 64–leucine 142 are domain II. Residues glutamine 143–threonine 149 are flexible linker. The domain III stretch occupies residues valine 150 to serine 200.

It belongs to the RuvA family. In terms of assembly, homotetramer. Forms an RuvA(8)-RuvB(12)-Holliday junction (HJ) complex. HJ DNA is sandwiched between 2 RuvA tetramers; dsDNA enters through RuvA and exits via RuvB. An RuvB hexamer assembles on each DNA strand where it exits the tetramer. Each RuvB hexamer is contacted by two RuvA subunits (via domain III) on 2 adjacent RuvB subunits; this complex drives branch migration. In the full resolvosome a probable DNA-RuvA(4)-RuvB(12)-RuvC(2) complex forms which resolves the HJ.

The protein resides in the cytoplasm. In terms of biological role, the RuvA-RuvB-RuvC complex processes Holliday junction (HJ) DNA during genetic recombination and DNA repair, while the RuvA-RuvB complex plays an important role in the rescue of blocked DNA replication forks via replication fork reversal (RFR). RuvA specifically binds to HJ cruciform DNA, conferring on it an open structure. The RuvB hexamer acts as an ATP-dependent pump, pulling dsDNA into and through the RuvAB complex. HJ branch migration allows RuvC to scan DNA until it finds its consensus sequence, where it cleaves and resolves the cruciform DNA. This is Holliday junction branch migration complex subunit RuvA from Staphylococcus aureus (strain USA300).